The primary structure comprises 227 residues: ATP-dependent dethiobiotin synthetase BioD (227 aa).

13–18 (DIGKTY) contacts ATP. Thr-17 contacts Mg(2+). Lys-38 is a catalytic residue. Residue Ser-42 participates in substrate binding. Residues Asp-55, 116-119 (EGSG), and 179-180 (NN) contribute to the ATP site. Mg(2+)-binding residues include Asp-55 and Glu-116.

This sequence belongs to the dethiobiotin synthetase family. Homodimer. Requires Mg(2+) as cofactor.

It localises to the cytoplasm. The catalysed reaction is (7R,8S)-7,8-diammoniononanoate + CO2 + ATP = (4R,5S)-dethiobiotin + ADP + phosphate + 3 H(+). It functions in the pathway cofactor biosynthesis; biotin biosynthesis; biotin from 7,8-diaminononanoate: step 1/2. Catalyzes a mechanistically unusual reaction, the ATP-dependent insertion of CO2 between the N7 and N8 nitrogen atoms of 7,8-diaminopelargonic acid (DAPA, also called 7,8-diammoniononanoate) to form a ureido ring. This chain is ATP-dependent dethiobiotin synthetase BioD, found in Clostridium botulinum (strain ATCC 19397 / Type A).